The following is a 456-amino-acid chain: Phosphomethylpyrimidine synthase (456 aa).

Substrate-binding positions include N80, M109, Y139, H175, 195-197, 236-239, and E275; these read SRG and DSLR. A Zn(2+)-binding site is contributed by H279. Residue Y302 coordinates substrate. H343 contacts Zn(2+). [4Fe-4S] cluster is bound by residues C423, C426, and C431.

The protein belongs to the ThiC family. The cofactor is [4Fe-4S] cluster.

The catalysed reaction is 5-amino-1-(5-phospho-beta-D-ribosyl)imidazole + S-adenosyl-L-methionine = 4-amino-2-methyl-5-(phosphooxymethyl)pyrimidine + CO + 5'-deoxyadenosine + formate + L-methionine + 3 H(+). It participates in cofactor biosynthesis; thiamine diphosphate biosynthesis. Functionally, catalyzes the synthesis of the hydroxymethylpyrimidine phosphate (HMP-P) moiety of thiamine from aminoimidazole ribotide (AIR) in a radical S-adenosyl-L-methionine (SAM)-dependent reaction. The polypeptide is Phosphomethylpyrimidine synthase (Prochlorococcus marinus (strain MIT 9215)).